The following is a 454-amino-acid chain: Macrophage scavenger receptor types I and II (454 aa).

Residues 1-22 (MAQWDSFTDQQEDTDSCSESVK) are disordered. At 1-50 (MAQWDSFTDQQEDTDSCSESVKFDARSNTALLPPNPKNGPPLQEKLKSFK) the chain is on the cytoplasmic side. The residue at position 27 (serine 27) is a Phosphoserine. Residues 51-73 (AALIALYLLVFAVLIPIIAIMAA) form a helical; Signal-anchor for type II membrane protein membrane-spanning segment. The segment at 74–109 (QLLKWEMKNCTVGSINANSVSSSLLGRGNDSEHEVR) is spacer. Over 74–454 (QLLKWEMKNC…GEDAGVTCTL (381 aa)) the chain is Extracellular. N-linked (GlcNAc...) asparagine glycans are attached at residues asparagine 82, asparagine 102, asparagine 143, asparagine 184, asparagine 221, asparagine 249, and asparagine 267. Residues 199–256 (VKFQENTLKGQEEISKLKERVHNASAEIMSMKEEQVHLEQEIKREVKVLNNITNDLRL) are a coiled coil. A disordered region spans residues 267 to 347 (NITLIQGPPG…KGEKGSGSIL (81 aa)). The Collagen-like domain occupies 273-344 (GPPGPPGEKG…KGQKGEKGSG (72 aa)). Residues 353-453 (VRLVGGRGPH…HGEDAGVTCT (101 aa)) form the SRCR domain. Cystine bridges form between cysteine 378–cysteine 442, cysteine 391–cysteine 452, and cysteine 422–cysteine 432.

In terms of assembly, homotrimer. Interacts with MYO18A.

It is found in the membrane. Membrane glycoproteins implicated in the pathologic deposition of cholesterol in arterial walls during atherogenesis. Two types of receptor subunits exist. These receptors mediate the endocytosis of a diverse group of macromolecules, including modified low density lipoproteins (LDL). This is Macrophage scavenger receptor types I and II (MSR1) from Oryctolagus cuniculus (Rabbit).